The chain runs to 264 residues: Non-homologous end-joining factor xrc4 (264 aa).

Over residues 173–186 the composition is skewed to basic and acidic residues; that stretch reads RNNEDNEDNHHINY. Positions 173-264 are disordered; it reads RNNEDNEDNH…SHESSETVSE (92 aa). Residues 200-209 show a composition bias toward polar residues; sequence QEGVNSSAVS. Residues 248-264 are compositionally biased toward basic and acidic residues; that stretch reads DDSHRRSSHESSETVSE.

This sequence belongs to the XRCC4-XLF family. XRCC4 subfamily. Interacts with lig4; the interaction is direct.

It is found in the nucleus. Involved in double-strand break repair via non-homologous end joining (NHEJ); the repair of a double-strand break in DNA in which the two broken ends are rejoined with little or no sequence complementarity. The protein is Non-homologous end-joining factor xrc4 of Schizosaccharomyces pombe (strain 972 / ATCC 24843) (Fission yeast).